The chain runs to 805 residues: Angiotensin-converting enzyme 2 (805 aa).

An N-terminal signal peptide occupies residues 1–17 (MSSSSWLLLSLVAVTTA). Over 18 to 740 (QSLTEENAKT…LEPPYQPPVT (723 aa)) the chain is Extracellular. Positions 19–607 (SLTEENAKTF…QNRNSFVGWN (589 aa)) constitute a Peptidase M2 domain. N-linked (GlcNAc...) asparagine glycosylation occurs at asparagine 53. The cysteines at positions 133 and 141 are disulfide-linked. Arginine 169 is a chloride binding site. Residues arginine 273 and 345-346 (HP) contribute to the substrate site. Residues cysteine 344 and cysteine 361 are joined by a disulfide bond. Histidine 374 is a binding site for Zn(2+). The Proton acceptor role is filled by glutamate 375. Positions 378 and 402 each coordinate Zn(2+). Tryptophan 477 and lysine 481 together coordinate chloride. Residue histidine 505 is the Proton donor of the active site. Tyrosine 515 is a binding site for substrate. Cysteines 530 and 542 form a disulfide. N-linked (GlcNAc...) asparagine glycosylation is found at asparagine 536 and asparagine 546. The 192-residue stretch at 614–805 (ADQSIKVRIS…QNSDDAQTSF (192 aa)) folds into the Collectrin-like domain. Positions 652–659 (RKYFSIIK) are essential for cleavage by ADAM17. Residues asparagine 660 and asparagine 690 are each glycosylated (N-linked (GlcNAc...) asparagine). An essential for cleavage by TMPRSS11D and TMPRSS2 region spans residues 697–716 (RSEVEDAIRMSRGRINDVFG). Residues 741–761 (IWLIIFGVVMALVVVGIIILI) form a helical membrane-spanning segment. At 762 to 805 (VTGIKGRKKKNETKREENPYDSMDIGKGESNAGFQNSDDAQTSF) the chain is on the cytoplasmic side. A disordered region spans residues 771–805 (KNETKREENPYDSMDIGKGESNAGFQNSDDAQTSF). An LIR motif is present at residues 778 to 786 (ENPYDSMDI). Phosphotyrosine is present on tyrosine 781. The Endocytic sorting signal signature appears at 781–784 (YDSM). Residues 781–785 (YDSMD) carry the SH2-binding motif. Serine 783 bears the Phosphoserine mark. Lysine 788 participates in a covalent cross-link: Glycyl lysine isopeptide (Lys-Gly) (interchain with G-Cter in ubiquitin). The PTB motif lies at 792–795 (NAGF). The segment covering 793–805 (AGFQNSDDAQTSF) has biased composition (polar residues). Residues 803 to 805 (TSF) carry the PDZ-binding motif.

It belongs to the peptidase M2 family. Homodimer. Interacts with the catalytically active form of TMPRSS2. Interacts with SLC6A19; this interaction is essential for expression and function of SLC6A19 in intestine. Interacts with ITGA5:ITGB1. Probably interacts (via endocytic sorting signal motif) with AP2M1; the interaction is inhibited by phosphorylation of Tyr-781. Interacts (via PDZ-binding motif) with NHERF1 (via PDZ domains); the interaction may enhance ACE2 membrane residence. In terms of assembly, (Microbial infection) Weakly interacts with SARS-CoV S protein. It depends on Zn(2+) as a cofactor. Chloride serves as cofactor. In terms of processing, proteolytic cleavage by ADAM17 generates a secreted form. Also cleaved by serine proteases: TMPRSS2, TMPRSS11D and HPN/TMPRSS1. Post-translationally, phosphorylated. Phosphorylation at Tyr-781 probably inhibits interaction with AP2M1 and enables interactions with proteins containing SH2 domains. Ubiquitinated. Ubiquitinated on Lys-788 via 'Lys-48'-linked ubiquitin. 'Lys-48'-linked deubiquitinated by USP50 on the Lys-788; leading to its stabilization. Expressed in heart, kidney and forebrain (at protein level). Expressed in the small intestine, with expression in the intestinal brush border (at protein level). Ubiquitously expressed, with highest levels in ileum, kidney and lung. In lung, expressed on vascular endothelial and airway epithelial cells. Also expressed at high levels in lung secretory club and goblet cells as well as in alveolar type 2 cells.

Its subcellular location is the secreted. The protein localises to the cell membrane. The protein resides in the cytoplasm. It is found in the cell projection. It localises to the cilium. Its subcellular location is the apical cell membrane. The enzyme catalyses angiotensin II + H2O = angiotensin-(1-7) + L-phenylalanine. It carries out the reaction angiotensin I + H2O = angiotensin-(1-9) + L-leucine. It catalyses the reaction bradykinin(1-8) + H2O = bradykinin(1-7) + L-phenylalanine. The catalysed reaction is neurotensin + H2O = neurotensin-(1-12) + L-leucine. The enzyme catalyses kinetensin + H2O = kinetensin-(1-8) + L-leucine. It carries out the reaction dynorphin A-(1-13) + H2O = dynorphin A-(1-12) + L-lysine. It catalyses the reaction apelin-13 + H2O = apelin-12 + L-phenylalanine. The catalysed reaction is [Pyr1]apelin-13 + H2O = [Pyr1]apelin-12 + L-phenylalanine. The enzyme catalyses apelin-17 + H2O = apelin-16 + L-phenylalanine. Functionally, essential counter-regulatory carboxypeptidase of the renin-angiotensin hormone system that is a critical regulator of blood volume, systemic vascular resistance, and thus cardiovascular homeostasis. Converts angiotensin I to angiotensin 1-9, a nine-amino acid peptide with anti-hypertrophic effects in cardiomyocytes, and angiotensin II to angiotensin 1-7, which then acts as a beneficial vasodilator and anti-proliferation agent, counterbalancing the actions of the vasoconstrictor angiotensin II. Also removes the C-terminal residue from three other vasoactive peptides, neurotensin, kinetensin, and des-Arg bradykinin, but is not active on bradykinin. Also cleaves other biological peptides, such as apelins, casomorphins and dynorphin A. By cleavage of angiotensin II, may be an important regulator of heart function. By cleavage of angiotensin II, may also have a protective role in acute lung injury. Plays an important role in amino acid transport by acting as binding partner of amino acid transporter SLC6A19, regulating its trafficking on the cell surface and its activity. This chain is Angiotensin-converting enzyme 2 (Ace2), found in Mus musculus (Mouse).